A 391-amino-acid chain; its full sequence is Phosphoprotein (391 aa).

3 positions are modified to phosphothreonine: T10, T16, and T39. S69 bears the Phosphoserine mark. Disordered stretches follow at residues 82–101 (SSSE…FAQT) and 143–208 (PRTS…PANV). Phosphothreonine occurs at positions 91, 150, and 165. A Phosphoserine modification is found at S188. Residues 198–208 (LPQQDSTPANV) are compositionally biased toward polar residues. Residues 218 to 245 (ANEIMDLLRGMDARLQHLEQKVDKVLAQ) are a coiled coil. T250 bears the Phosphothreonine mark. The residue at position 257 (S257) is a Phosphoserine. T258 and T282 each carry phosphothreonine. S292 and S294 each carry phosphoserine. T298 is subject to Phosphothreonine. 2 positions are modified to phosphoserine: S301 and S374. The segment at 343-391 (AGRKVMITKMITDCVANPQMKQAFEQRLAKASTEDALNDIKRDIIRSAI) is interaction with the nucleoprotein. Residues 348-391 (MITKMITDCVANPQMKQAFEQRLAKASTEDALNDIKRDIIRSAI) form a x domain (XD) region. Phosphothreonine is present on T375.

The protein belongs to the rubulavirus/avulavirus P protein family. As to quaternary structure, homotetramer. Interacts (via multimerization domain) with polymerase L; this interaction forms the polymerase L-P complex. Interacts (via N-terminus) with N0 (via Ncore); this interaction allows P to chaperon N0 to avoid N polymerization before encapsidation. Interacts (via C-terminus) with N-RNA template; this interaction positions the polymerase on the template for both transcription and replication. Interacts with host RPS6KB1 kinase; this interaction may play a role in the viral replication and transcription.

The protein resides in the virion. Functionally, essential cofactor of the RNA polymerase L that plays a central role in the transcription and replication by forming the polymerase complex with RNA polymerase L and recruiting L to the genomic N-RNA template for RNA synthesis. Also plays a central role in the encapsidation of nascent RNA chains by forming the encapsidation complex with the nucleocapsid protein N (N-P complex). Acts as a chaperone for newly synthesized free N protein, so-called N0, allowing encapsidation of nascent RNA chains during replication. The nucleoprotein protein N prevents excessive phosphorylation of P, which leads to down-regulation of viral transcription/ replication. Participates, together with N, in the formation of viral factories (viroplasms), which are large inclusions in the host cytoplasm where replication takes place. The chain is Phosphoprotein (V/P) from Mumps orthorubulavirus (MuV).